Reading from the N-terminus, the 635-residue chain is MIKITLKDGKVMEFEEGIKISDIAMKISPALYKKALAAKIDGETVDLMTELHKDSSLEILTFEDEMGKWALRHTGAHILAQAVKRLYPEVKLAIGPAIDTGFYYDFEADFTFTPEMLEKIEAEIKKIIKENHKLERFELPREEAIDLMKEKNEDYKVELIEDLPEGEVISFYKQGDFTDLCAGPHVPSTGKVKSVKLLSLAGAYWRGDENNKMLQRIYGTAFTKKSELDEYLNMLEEAKKRDHRKLGKELDLFSIHEEGPGFPFFHPKGMIIRNILESFWREEHTKAGYQEIRTPLILNEALWHQSGHWDHYKENMYFTNIDDGDYAIKPMNCPGGILVYKNSMHSYRDLPLRLSELGIVHRHELSGALHGLMRVRCFTQDDAHLYMTKEQIKEEIVGIIKLIDKFYKLFGFEYFVELSTRPEDSMGSDEDWEIATNGLREALDSIGKEYRVNEGDGAFYGPKIDFHLKDCIGRTWQCGTIQLDFQMPERFDLSYIGADGEKHRPVMVHRTIYGSVERFIGILIEQYAGAFPTWLAPVQVKLMNITDAQYDYLKKVEEALKENNIRVEIDTRNEKIGYKIREAQLQKIPYMLILGDKEVEAGKVAVRSRKDGDLGAISLEEFIEKIKNEIKVKTN.

Positions 1 to 61 (MIKITLKDGK…HKDSSLEILT (61 aa)) constitute a TGS domain. Positions 242 to 532 (DHRKLGKELD…LIEQYAGAFP (291 aa)) are catalytic. Positions 333, 384, and 509 each coordinate Zn(2+).

The protein belongs to the class-II aminoacyl-tRNA synthetase family. As to quaternary structure, homodimer. Requires Zn(2+) as cofactor.

Its subcellular location is the cytoplasm. The catalysed reaction is tRNA(Thr) + L-threonine + ATP = L-threonyl-tRNA(Thr) + AMP + diphosphate + H(+). In terms of biological role, catalyzes the attachment of threonine to tRNA(Thr) in a two-step reaction: L-threonine is first activated by ATP to form Thr-AMP and then transferred to the acceptor end of tRNA(Thr). Also edits incorrectly charged L-seryl-tRNA(Thr). This chain is Threonine--tRNA ligase, found in Clostridium botulinum (strain Loch Maree / Type A3).